The sequence spans 575 residues: Jasmonoyl--L-amino acid synthetase JAR1 (575 aa).

Positions 10–30 (MNRVIDEFDEMTRNAHQVQKQ) form a coiled coil. Serine 98 is a binding site for ATP. Serine 101 contributes to the jasmonate binding site. ATP is bound by residues methionine 118, threonine 121, glycine 163, asparagine 168, and 331–336 (GSSEGW). 166–170 (TTNVY) lines the an L-alpha-amino acid pocket. Position 328–331 (328–331 (HDYG)) interacts with jasmonate. 530–534 (KIQEH) is an an L-alpha-amino acid binding site. ATP is bound at residue lysine 557.

The protein belongs to the IAA-amido conjugating enzyme family. In terms of assembly, interacts with GSTU20/FIP1 under continuous far red (cFR) light; this binding increases its activity and determines the priority of substrate binding.

It is found in the cytoplasm. It carries out the reaction a jasmonate + an L-alpha-amino acid + ATP = a jasmonyl-L-amino acid + AMP + diphosphate + H(+). It catalyses the reaction (+)-7-isojasmonate + L-isoleucine + ATP = L-isoleucine-(+)-7-isojasmonate + AMP + diphosphate + H(+). With respect to regulation, activated by GSTU20/FIP1. Functionally, catalyzes the synthesis of jasmonates-amino acid conjugates by adenylation; can use Ile and, in vitro at least, Val, Leu and Phe as conjugating amino acids on jasmonic acid (JA) and 9,10-dihydro-JA substrates, and to a lower extent, on 3-oxo-2-(2Z-pentenyl)-cyclopentane-1-butyric acid (OPC-4) and 12-hydroxy-JA (12-OH-JA). Can synthesize adenosine 5-tetraphosphate in vitro. Required for the JA-mediated signaling pathway that regulates many developmental and defense mechanisms, including growth root inhibition, vegetative storage proteins (VSPs) accumulation, induced systemic resistance (ISR), response to wounding and herbivores, tolerance to ozone O(3) (probably having a role in lesion containment). Plays an important role in the accumulation of JA-Ile in response to wounding, both locally and systemically; promotes JA responding genes especially in distal part of wounded plants, via the JA-Ile-stimulated degradation of JAZ repressor proteins by the SCF(COI)E3 ubiquitin-protein ligase pathway. Involved in the apoptosis-like programmed cell death (PCD) induced by fungal toxin fumonisin B1-mediated (FB1). Required for volatile compounds (C6-aldehydes and allo-ocimene)-mediated defense activation. Involved in the non-pathogenic rhizobacterium-mediated ISR (defense priming) by P.fluorescens (strains CHAOr and WCS417r) and P.putida LSW17S against infection leaf pathogens such as P.syringae pv. tomato and H.parasitica. Required for the JA-dependent resistance to fungi such as P.irregulare, U.vignae and U.appendiculatus. Necessary to induce systemic resistance against R.solanaceraum and P.syringae pv. tomato with P.oligandrum (a non-pathogenic biocontrol agent) cell wall protein fraction (CWP). Mediates PGIP2 accumulation in response to B.cinerea infection and thus contributes to resistance against this pathogen. Modulates the UV-B alteration of leaves attractiveness to diamondback moths P.xylostella leading to insect oviposition. Involved in the regulation of far-red light influence on development, being an actor of the interplay between light and JA signaling. Seems necessary for the salicylic acid (SA)-mediated, NPR1-independent resistance pathway. May contribute to the chitin-elicited pathway. Contributes to the sensitivity toward F.graminearum. The protein is Jasmonoyl--L-amino acid synthetase JAR1 of Arabidopsis thaliana (Mouse-ear cress).